Here is a 317-residue protein sequence, read N- to C-terminus: MSRSALVGNITAMLEDAGFTVSDRCAIRPKSFDIAARRGDDVLLLKVLANIDAFDGYTGTEMRRLGEYLDATPLVIGLRTRDEELKPGVVYFRHGVPVFSPDTAMDLFIEEVPPLIYAAPGGLYVNIDGDLLSDIRSQEDMSLGKLANELGVSRRTVSKYEDGMSASVEVAAELEEIFDRKLASPVEVLSGAEEVRDDVDEPEAPEADPDDAEIVTVLTRVGFEVHPTMQAPFKAVSEDEKRERKVLTGHSEFNRTAEKRARIMSSVGHVTRTRSVYVVDSTKRDSVDGTALIEREEFERIHDSDELENLIRERAEG.

One can recognise an HTH cro/C1-type domain in the interval 132–189 (LSDIRSQEDMSLGKLANELGVSRRTVSKYEDGMSASVEVAAELEEIFDRKLASPVEVL). Residues 143-162 (LGKLANELGVSRRTVSKYED) constitute a DNA-binding region (H-T-H motif).

This is Putative HTH-type transcriptional regulatory protein NP_1320A from Natronomonas pharaonis (strain ATCC 35678 / DSM 2160 / CIP 103997 / JCM 8858 / NBRC 14720 / NCIMB 2260 / Gabara) (Halobacterium pharaonis).